The chain runs to 334 residues: Hydroxyproline O-arabinosyltransferase NOD3 (334 aa).

A helical; Signal-anchor transmembrane segment spans residues 1 to 18 (LLMVLGFFFATYNLVSMI).

Belongs to the RDN family.

Its subcellular location is the golgi apparatus membrane. It carries out the reaction trans-4-hydroxy-L-prolyl-[protein] + UDP-beta-L-arabinofuranose = O-(beta-L-arabinofuranosyl)-trans-4-hydroxy-L-prolyl-[protein] + UDP + H(+). Functionally, probable glycosyltransferase involved in the O-arabinosylation of several proteins including extensins and small signaling peptides. Catalyzes the transfer of the initial L-arabinose to the hydroxyl group of Hyp residues. Probably involved in the arabinosylation of CLAVATA3/ESR-related (CLE) signaling peptides that move from root to shoot, to interact with receptor kinase signaling that regulates nodulation. Involved in long distance nodulation signaling events. Involved in the autoregulation of nodulation (AON), a long distance systemic signaling from root to shoot and back again, which allows legumes to limit the number of root nodules formed based on available nitrogen and previous rhizobial colonization. The protein is Hydroxyproline O-arabinosyltransferase NOD3 of Pisum sativum (Garden pea).